A 902-amino-acid chain; its full sequence is Gamma-tubulin complex component 2 (902 aa).

Tyrosine 83 bears the Phosphotyrosine mark. A disordered region spans residues 875–902 (ERSQKAAPQVPVLRGPPAPAPRVAVTAQ).

The protein belongs to the TUBGCP family. In terms of assembly, component of the gamma-tubulin ring complex (gTuRC) consisting of TUBGCP2, TUBGCP3, TUBGCP4, TUBGCP5 and TUBGCP6 and gamma-tubulin TUBG1 or TUBG2. TUBGCP2, TUBGCP3, TUBGCP4, TUBGCP5 and TUBGCP6 assemble in a 5:5:2:1:1 stoichiometry; each is associated with a gamma-tubulin, thereby arranging 14 gamma-tubulins in a helical manner. Gamma-tubulin at the first position is blocked by TUBGCP3 at the last position, allowing 13 protafilaments to grow into a microtubule. The gTuRC (via TUBGCP3 and TUBGCP6) interacts with ACTB and MZT1; the interactions form a luminal bridge that stabilizes the initial structure during complex assembly. The gTuRC (via TUBGCP2) interacts with MZT2A/MZT2B and CDK5RAP2 (via CM1 motif); the interactions play a role in gTuRC activation. Interacts with ATF5; the ATF5:PCNT:polyglutamylated tubulin (PGT) tripartite unites the mother centriole and the pericentriolar material (PCM) in the centrosome.

It localises to the cytoplasm. The protein resides in the cytoskeleton. Its subcellular location is the microtubule organizing center. The protein localises to the centrosome. In terms of biological role, component of the gamma-tubulin ring complex (gTuRC) which mediates microtubule nucleation. The gTuRC regulates the minus-end nucleation of alpha-beta tubulin heterodimers that grow into microtubule protafilaments, a critical step in centrosome duplication and spindle formation. Plays a role in neuronal migration. The protein is Gamma-tubulin complex component 2 (TUBGCP2) of Pongo abelii (Sumatran orangutan).